Here is a 122-residue protein sequence, read N- to C-terminus: ATP-dependent Clp protease adapter protein ClpS (122 aa).

The tract at residues 1–33 (MHAPSQIRLTFNQDHPEPHEHEDEGAGLAVQES) is disordered. Residues 14–24 (DHPEPHEHEDE) show a composition bias toward basic and acidic residues.

The protein belongs to the ClpS family. As to quaternary structure, binds to the N-terminal domain of the chaperone ClpA.

Its function is as follows. Involved in the modulation of the specificity of the ClpAP-mediated ATP-dependent protein degradation. The protein is ATP-dependent Clp protease adapter protein ClpS of Pseudomonas aeruginosa (strain ATCC 15692 / DSM 22644 / CIP 104116 / JCM 14847 / LMG 12228 / 1C / PRS 101 / PAO1).